A 284-amino-acid chain; its full sequence is NAD kinase (284 aa).

The active-site Proton acceptor is the Asp60. Residues 60–61, 134–135, Lys145, Arg162, Asp164, and Gln235 contribute to the NAD(+) site; these read DG and ND.

It belongs to the NAD kinase family. A divalent metal cation is required as a cofactor.

The protein localises to the cytoplasm. It carries out the reaction NAD(+) + ATP = ADP + NADP(+) + H(+). Its function is as follows. Involved in the regulation of the intracellular balance of NAD and NADP, and is a key enzyme in the biosynthesis of NADP. Catalyzes specifically the phosphorylation on 2'-hydroxyl of the adenosine moiety of NAD to yield NADP. In Treponema denticola (strain ATCC 35405 / DSM 14222 / CIP 103919 / JCM 8153 / KCTC 15104), this protein is NAD kinase.